The primary structure comprises 795 residues: Probable alpha,alpha-trehalose-phosphate synthase [UDP-forming] 4 (795 aa).

The glycosyltransferase stretch occupies residues 4-469; sequence PRLLVVSMSL…WADDFMKLTL (466 aa).

It in the N-terminal section; belongs to the glycosyltransferase 20 family. This sequence in the C-terminal section; belongs to the trehalose phosphatase family.

The catalysed reaction is D-glucose 6-phosphate + UDP-alpha-D-glucose = alpha,alpha-trehalose 6-phosphate + UDP + H(+). The polypeptide is Probable alpha,alpha-trehalose-phosphate synthase [UDP-forming] 4 (TPS4) (Arabidopsis thaliana (Mouse-ear cress)).